A 310-amino-acid chain; its full sequence is Lipoyl synthase (310 aa).

Positions 41, 46, 52, 68, 72, 75, and 281 each coordinate [4Fe-4S] cluster. The region spanning 54 to 270 (GERRTATFMI…RKVAMEKGFK (217 aa)) is the Radical SAM core domain. Positions 285–310 (DEQVNEAAKERQRIGDEKLEAAKNEA) are disordered.

The protein belongs to the radical SAM superfamily. Lipoyl synthase family. [4Fe-4S] cluster serves as cofactor.

It localises to the cytoplasm. It carries out the reaction [[Fe-S] cluster scaffold protein carrying a second [4Fe-4S](2+) cluster] + N(6)-octanoyl-L-lysyl-[protein] + 2 oxidized [2Fe-2S]-[ferredoxin] + 2 S-adenosyl-L-methionine + 4 H(+) = [[Fe-S] cluster scaffold protein] + N(6)-[(R)-dihydrolipoyl]-L-lysyl-[protein] + 4 Fe(3+) + 2 hydrogen sulfide + 2 5'-deoxyadenosine + 2 L-methionine + 2 reduced [2Fe-2S]-[ferredoxin]. It functions in the pathway protein modification; protein lipoylation via endogenous pathway; protein N(6)-(lipoyl)lysine from octanoyl-[acyl-carrier-protein]. In terms of biological role, catalyzes the radical-mediated insertion of two sulfur atoms into the C-6 and C-8 positions of the octanoyl moiety bound to the lipoyl domains of lipoate-dependent enzymes, thereby converting the octanoylated domains into lipoylated derivatives. This Staphylococcus carnosus (strain TM300) protein is Lipoyl synthase.